A 270-amino-acid polypeptide reads, in one-letter code: MAKKDGNQEEEISQMEEGNIHSASNSDSNVGFCSSVSVVVILQKLIAEAIGTYFVIFAGCGSVAVNKIYGSVTFPGICVTWGLIVMVMVYTVGYISGAHFNPAVTITFSIFGRFPWKQVPLYIIAQLMGSILASGTLALLFDVTPQAYFGTVPVGSNGQSLAIEIIISFLLMFVISGVATDDRAIGQVAGIAVGMTITLNVFVAGPISGASMNPARSIGPAIVKHVYTGLWVYVVGPIIGTLAGAFVYNLIRSTDKPLRELAKSASSLRS.

A run of 2 helical transmembrane segments spans residues 45–65 and 72–92; these read LIAEAIGTYFVIFAGCGSVAV and VTFPGICVTWGLIVMVMVYTV. An NPA 1 motif is present at residues 101 to 103; it reads NPA. 3 consecutive transmembrane segments (helical) span residues 121–141, 160–180, and 188–208; these read LYIIAQLMGSILASGTLALLF, SLAIEIIISFLLMFVISGVAT, and VAGIAVGMTITLNVFVAGPIS. The NPA 2 signature appears at 213–215; the sequence is NPA. A helical membrane pass occupies residues 231 to 251; sequence WVYVVGPIIGTLAGAFVYNLI.

Belongs to the MIP/aquaporin (TC 1.A.8) family. NIP (TC 1.A.8.12) subfamily. Pollen specific.

It localises to the membrane. In terms of biological role, aquaporins facilitate the transport of water and small neutral solutes across cell membranes. This is Probable aquaporin NIP-type from Nicotiana alata (Winged tobacco).